A 158-amino-acid polypeptide reads, in one-letter code: Superoxide dismutase [Cu-Zn] (158 aa).

Residues histidine 46, histidine 48, and histidine 63 each contribute to the Cu cation site. A disulfide bond links cysteine 57 and cysteine 149. Positions 63, 71, 80, and 83 each coordinate Zn(2+). Histidine 120 provides a ligand contact to Cu cation.

This sequence belongs to the Cu-Zn superoxide dismutase family. As to quaternary structure, homodimer. The cofactor is Cu cation. Zn(2+) is required as a cofactor.

It is found in the cytoplasm. The enzyme catalyses 2 superoxide + 2 H(+) = H2O2 + O2. Functionally, destroys radicals which are normally produced within the cells and which are toxic to biological systems. The sequence is that of Superoxide dismutase [Cu-Zn] (SODC) from Brugia pahangi (Filarial nematode worm).